Reading from the N-terminus, the 524-residue chain is Cytokinin dehydrogenase 4 (524 aa).

The signal sequence occupies residues methionine 1–serine 26. Residues asparagine 39 and asparagine 58 are each glycosylated (N-linked (GlcNAc...) asparagine). In terms of domain architecture, FAD-binding PCMH-type spans threonine 60–alanine 249. Residues alanine 104, glycine 106, and glycine 108 each coordinate FAD. Histidine 109 is modified (pros-8alpha-FAD histidine). FAD-binding residues include serine 110 and glutamine 114. The N-linked (GlcNAc...) asparagine glycan is linked to asparagine 124. FAD-binding residues include aspartate 173, serine 178, serine 184, isoleucine 188, and isoleucine 239. Residue asparagine 411 is glycosylated (N-linked (GlcNAc...) asparagine). Positions 482, 517, and 520 each coordinate FAD.

It belongs to the oxygen-dependent FAD-linked oxidoreductase family. The cofactor is FAD. In terms of tissue distribution, expressed in trichomes and in developing stomata of young growing leaves. Strong expression in stipules and in the root cap, but not detected in the root meristem.

It is found in the secreted. It localises to the extracellular space. It catalyses the reaction N(6)-dimethylallyladenine + A + H2O = 3-methyl-2-butenal + adenine + AH2. In terms of biological role, catalyzes the oxidation of cytokinins, a family of N(6)-substituted adenine derivatives that are plant hormones, where the substituent is an isopentenyl group. The protein is Cytokinin dehydrogenase 4 (CKX4) of Arabidopsis thaliana (Mouse-ear cress).